The following is a 156-amino-acid chain: Small ribosomal subunit protein uS7 (156 aa).

The protein belongs to the universal ribosomal protein uS7 family. In terms of assembly, part of the 30S ribosomal subunit. Contacts proteins S9 and S11.

In terms of biological role, one of the primary rRNA binding proteins, it binds directly to 16S rRNA where it nucleates assembly of the head domain of the 30S subunit. Is located at the subunit interface close to the decoding center, probably blocks exit of the E-site tRNA. In Treponema pallidum (strain Nichols), this protein is Small ribosomal subunit protein uS7.